A 395-amino-acid polypeptide reads, in one-letter code: Imidazolonepropionase (395 aa).

The Fe(3+) site is built by His-63 and His-65. Positions 63 and 65 each coordinate Zn(2+). 4-imidazolone-5-propanoate contacts are provided by Arg-72, Tyr-135, and His-168. Tyr-135 contacts N-formimidoyl-L-glutamate. His-233 contributes to the Fe(3+) binding site. Zn(2+) is bound at residue His-233. Gln-236 is a 4-imidazolone-5-propanoate binding site. Asp-308 contributes to the Fe(3+) binding site. Residue Asp-308 coordinates Zn(2+). Asn-310 and Gly-312 together coordinate N-formimidoyl-L-glutamate. Thr-313 contacts 4-imidazolone-5-propanoate.

It belongs to the metallo-dependent hydrolases superfamily. HutI family. Requires Zn(2+) as cofactor. It depends on Fe(3+) as a cofactor.

It is found in the cytoplasm. The catalysed reaction is 4-imidazolone-5-propanoate + H2O = N-formimidoyl-L-glutamate. The protein operates within amino-acid degradation; L-histidine degradation into L-glutamate; N-formimidoyl-L-glutamate from L-histidine: step 3/3. Functionally, catalyzes the hydrolytic cleavage of the carbon-nitrogen bond in imidazolone-5-propanoate to yield N-formimidoyl-L-glutamate. It is the third step in the universal histidine degradation pathway. The polypeptide is Imidazolonepropionase (Cereibacter sphaeroides (strain ATCC 17029 / ATH 2.4.9) (Rhodobacter sphaeroides)).